The sequence spans 246 residues: Probable transcriptional regulatory protein CLK_2466 (246 aa).

This sequence belongs to the TACO1 family.

Its subcellular location is the cytoplasm. The chain is Probable transcriptional regulatory protein CLK_2466 from Clostridium botulinum (strain Loch Maree / Type A3).